The primary structure comprises 349 residues: Holliday junction branch migration complex subunit RuvB (349 aa).

The interval 1 to 181 is large ATPase domain (RuvB-L); it reads MDDRILTSVN…FGVLCPMEFY (181 aa). Residues L20, R21, G62, K65, T66, T67, 128-130, R171, Y181, and R218 contribute to the ATP site; that span reads EDY. T66 is a Mg(2+) binding site. Residues 182–252 are small ATPAse domain (RuvB-S); sequence NDEELKEIIV…SAKKALNLLE (71 aa). The tract at residues 255 to 349 is head domain (RuvB-H); it reads DEGFDSIDNK…DQCSFFKKEK (95 aa). The DNA site is built by R310 and R315.

Belongs to the RuvB family. As to quaternary structure, homohexamer. Forms an RuvA(8)-RuvB(12)-Holliday junction (HJ) complex. HJ DNA is sandwiched between 2 RuvA tetramers; dsDNA enters through RuvA and exits via RuvB. An RuvB hexamer assembles on each DNA strand where it exits the tetramer. Each RuvB hexamer is contacted by two RuvA subunits (via domain III) on 2 adjacent RuvB subunits; this complex drives branch migration. In the full resolvosome a probable DNA-RuvA(4)-RuvB(12)-RuvC(2) complex forms which resolves the HJ.

The protein resides in the cytoplasm. The enzyme catalyses ATP + H2O = ADP + phosphate + H(+). Its function is as follows. The RuvA-RuvB-RuvC complex processes Holliday junction (HJ) DNA during genetic recombination and DNA repair, while the RuvA-RuvB complex plays an important role in the rescue of blocked DNA replication forks via replication fork reversal (RFR). RuvA specifically binds to HJ cruciform DNA, conferring on it an open structure. The RuvB hexamer acts as an ATP-dependent pump, pulling dsDNA into and through the RuvAB complex. RuvB forms 2 homohexamers on either side of HJ DNA bound by 1 or 2 RuvA tetramers; 4 subunits per hexamer contact DNA at a time. Coordinated motions by a converter formed by DNA-disengaged RuvB subunits stimulates ATP hydrolysis and nucleotide exchange. Immobilization of the converter enables RuvB to convert the ATP-contained energy into a lever motion, pulling 2 nucleotides of DNA out of the RuvA tetramer per ATP hydrolyzed, thus driving DNA branch migration. The RuvB motors rotate together with the DNA substrate, which together with the progressing nucleotide cycle form the mechanistic basis for DNA recombination by continuous HJ branch migration. Branch migration allows RuvC to scan DNA until it finds its consensus sequence, where it cleaves and resolves cruciform DNA. The polypeptide is Holliday junction branch migration complex subunit RuvB (Clostridium acetobutylicum (strain ATCC 824 / DSM 792 / JCM 1419 / IAM 19013 / LMG 5710 / NBRC 13948 / NRRL B-527 / VKM B-1787 / 2291 / W)).